The following is a 243-amino-acid chain: I/6 autoantigen (243 aa).

The EF-hand domain maps to 110 to 145; sequence LSVEEVDALFNALDSDNRGYVSVDEFMDALYGEEGR. The disordered stretch occupies residues 166-243; sequence PSWRMRPTPK…PPKQKAGCGC (78 aa). Basic residues predominate over residues 176–196; the sequence is PTRKLRQKRKREQGQKRKQGQ. 6 repeat units span residues 181 to 188, 189 to 196, 197 to 204, 205 to 212, 213 to 220, and 221 to 228. A 6 X 8 AA tandem repeats region spans residues 181 to 228; sequence RQKRKREQGQKRKQGQRQKQEQGQRQKREQGQRQKQEQGQKRKRERGG. Residues 198–220 show a composition bias toward basic and acidic residues; it reads QKQEQGQRQKREQGQRQKQEQGQ.

It is found in the cytoplasm. The protein resides in the cytoskeleton. Its function is as follows. Microtubule-associated protein that may be involved in cross-linking microtubules. This is I/6 autoantigen from Trypanosoma brucei brucei.